A 125-amino-acid chain; its full sequence is Homeobox protein HD-8 (125 aa).

The segment at residues 30–89 (EPDTRTRKTTFQMMVLKEVFKIAPHPSTLTKADLALMIKLPLKAVQIWFQNERSRKERGG) is a DNA-binding region (homeobox).

It localises to the nucleus. This Encephalitozoon cuniculi (strain GB-M1) (Microsporidian parasite) protein is Homeobox protein HD-8 (HD-8).